The sequence spans 498 residues: ATP synthase subunit beta, chloroplastic (498 aa).

The residue at position 6 (threonine 6) is a Phosphothreonine. Serine 13 carries the post-translational modification Phosphoserine. 172-179 lines the ATP pocket; the sequence is GGAGVGKT.

The protein belongs to the ATPase alpha/beta chains family. F-type ATPases have 2 components, CF(1) - the catalytic core - and CF(0) - the membrane proton channel. CF(1) has five subunits: alpha(3), beta(3), gamma(1), delta(1), epsilon(1). CF(0) has four main subunits: a(1), b(1), b'(1) and c(9-12).

It is found in the plastid. The protein resides in the chloroplast thylakoid membrane. It carries out the reaction ATP + H2O + 4 H(+)(in) = ADP + phosphate + 5 H(+)(out). Functionally, produces ATP from ADP in the presence of a proton gradient across the membrane. The catalytic sites are hosted primarily by the beta subunits. The protein is ATP synthase subunit beta, chloroplastic of Brassica napus (Rape).